The chain runs to 212 residues: uncharacterized protein (212 aa).

A helical membrane pass occupies residues 11–31 (NLIFFQFIVYFFFISLTILII).

It localises to the membrane. This is an uncharacterized protein from Rickettsia prowazekii (strain Madrid E).